We begin with the raw amino-acid sequence, 90 residues long: MTSHSAVRIAIFAVIALHSIFECLSKPQILQRTDKSTDSEWDPQTCPETCIPSKNITCSDGCVCVKLGEEEEGTCFNMTGVDWLGSPSDD.

The N-terminal stretch at M1–S25 is a signal peptide. Disulfide bonds link C46–C62, C50–C64, and C58–C75. N55 carries N-linked (GlcNAc...) asparagine glycosylation. N77 carries an N-linked (GlcNAc...) asparagine glycan.

Its subcellular location is the secreted. Its function is as follows. Salivary chemokine-binding protein which binds to host chemokines CXCL1, CXCL2, CXCL3, CXCL4, CXCL5, CXCL6, CXCL7, CXCL10 and CXCL11. The polypeptide is Evasin P1126 (Amblyomma cajennense (Cayenne tick)).